Reading from the N-terminus, the 347-residue chain is Transcription factor JunB (347 aa).

Glycyl lysine isopeptide (Lys-Gly) (interchain with G-Cter in SUMO2) cross-links involve residues Lys4, Lys33, and Lys36. The segment at 51-73 (KAPGARGPGPEGGGGGSYFSGQG) is disordered. The span at 56 to 68 (RGPGPEGGGGGSY) shows a compositional bias: gly residues. Lys81 is covalently cross-linked (Glycyl lysine isopeptide (Lys-Gly) (interchain with G-Cter in SUMO2)). Thr102 and Thr104 each carry phosphothreonine. Position 117 is a phosphoserine (Ser117). Lys141 participates in a covalent cross-link: Glycyl lysine isopeptide (Lys-Gly) (interchain with G-Cter in SUMO2). Positions 239-253 (FKEEPQTVPEARSRD) are enriched in basic and acidic residues. The tract at residues 239–260 (FKEEPQTVPEARSRDATPPVSP) is disordered. Lys240 is modified (N6-acetyllysine; alternate). A Glycyl lysine isopeptide (Lys-Gly) (interchain with G-Cter in SUMO1); alternate cross-link involves residue Lys240. A Glycyl lysine isopeptide (Lys-Gly) (interchain with G-Cter in SUMO2); alternate cross-link involves residue Lys240. Ser251 carries the post-translational modification Phosphoserine. Phosphothreonine is present on Thr255. A Phosphoserine modification is found at Ser259. The basic motif stretch occupies residues 268–295 (RIKVERKRLRNRLAATKCRKRKLERIAR). A bZIP domain is found at 268–331 (RIKVERKRLR…AQLKQKVMTH (64 aa)). The interval 296-324 (LEDKVKTLKAENAGLSSTAGLLREQVAQL) is leucine-zipper. Lys343 is covalently cross-linked (Glycyl lysine isopeptide (Lys-Gly) (interchain with G-Cter in SUMO2)).

The protein belongs to the bZIP family. Jun subfamily. In terms of assembly, binds DNA as a homodimer or as a heterodimer with another member of the Jun/Fos family. Component of an AP-1 transcription factor complex composed of JUN-FOS heterodimers composed of JUN-FOS heterodimers. As part of the AP-1 transcription factor complex, forms heterodimers with FOSB, thereby binding to the AP-1 consensus sequence and stimulating transcription. Interacts with ITCH (via its WW domains). Ubiquitinated by ITCH, leading to its degradation.

It is found in the nucleus. In terms of biological role, transcription factor involved in regulating gene activity following the primary growth factor response. Binds to the DNA sequence 5'-TGA[GC]TCA-3'. Heterodimerizes with proteins of the FOS family to form an AP-1 transcription complex, thereby enhancing its DNA binding activity to an AP-1 consensus sequence and its transcriptional activity. This Homo sapiens (Human) protein is Transcription factor JunB (JUNB).